The sequence spans 488 residues: Phenylalanine--tRNA ligase alpha subunit (488 aa).

L-phenylalanine-binding positions include threonine 315, 354–356, phenylalanine 394, and phenylalanine 419; that span reads QLD.

It belongs to the class-II aminoacyl-tRNA synthetase family. Phe-tRNA synthetase alpha subunit type 2 subfamily. As to quaternary structure, tetramer of two alpha and two beta subunits. Requires Mg(2+) as cofactor.

It is found in the cytoplasm. The enzyme catalyses tRNA(Phe) + L-phenylalanine + ATP = L-phenylalanyl-tRNA(Phe) + AMP + diphosphate + H(+). The polypeptide is Phenylalanine--tRNA ligase alpha subunit (Pyrobaculum arsenaticum (strain DSM 13514 / JCM 11321 / PZ6)).